The following is a 549-amino-acid chain: Hydroxylamine reductase (549 aa).

[4Fe-4S] cluster is bound by residues cysteine 5, cysteine 8, cysteine 17, and cysteine 23. Hybrid [4Fe-2O-2S] cluster contacts are provided by histidine 242, glutamate 266, cysteine 310, cysteine 402, cysteine 430, cysteine 455, glutamate 490, and lysine 492. At cysteine 402 the chain carries Cysteine persulfide.

The protein belongs to the HCP family. The cofactor is [4Fe-4S] cluster. Hybrid [4Fe-2O-2S] cluster is required as a cofactor.

It localises to the cytoplasm. It catalyses the reaction A + NH4(+) + H2O = hydroxylamine + AH2 + H(+). Its function is as follows. Catalyzes the reduction of hydroxylamine to form NH(3) and H(2)O. This is Hydroxylamine reductase from Clostridium novyi (strain NT).